The following is a 368-amino-acid chain: Queuine tRNA-ribosyltransferase (368 aa).

Asp-89 serves as the catalytic Proton acceptor. Substrate-binding positions include 89–93 (DSGGF), Asp-143, Gln-187, and Gly-214. The active-site Nucleophile is the Asp-264. Residues 269-273 (TRNAR) are RNA binding; important for wobble base 34 recognition. Cys-302, Cys-304, Cys-307, and His-333 together coordinate Zn(2+).

Belongs to the queuine tRNA-ribosyltransferase family. Homodimer. Within each dimer, one monomer is responsible for RNA recognition and catalysis, while the other monomer binds to the replacement base PreQ1. Zn(2+) is required as a cofactor.

It carries out the reaction 7-aminomethyl-7-carbaguanine + guanosine(34) in tRNA = 7-aminomethyl-7-carbaguanosine(34) in tRNA + guanine. It functions in the pathway tRNA modification; tRNA-queuosine biosynthesis. Its function is as follows. Catalyzes the base-exchange of a guanine (G) residue with the queuine precursor 7-aminomethyl-7-deazaguanine (PreQ1) at position 34 (anticodon wobble position) in tRNAs with GU(N) anticodons (tRNA-Asp, -Asn, -His and -Tyr). Catalysis occurs through a double-displacement mechanism. The nucleophile active site attacks the C1' of nucleotide 34 to detach the guanine base from the RNA, forming a covalent enzyme-RNA intermediate. The proton acceptor active site deprotonates the incoming PreQ1, allowing a nucleophilic attack on the C1' of the ribose to form the product. After dissociation, two additional enzymatic reactions on the tRNA convert PreQ1 to queuine (Q), resulting in the hypermodified nucleoside queuosine (7-(((4,5-cis-dihydroxy-2-cyclopenten-1-yl)amino)methyl)-7-deazaguanosine). This Blochmanniella pennsylvanica (strain BPEN) protein is Queuine tRNA-ribosyltransferase.